Consider the following 336-residue polypeptide: Inositol 2-dehydrogenase (336 aa).

Belongs to the Gfo/Idh/MocA family. As to quaternary structure, homotetramer.

The enzyme catalyses myo-inositol + NAD(+) = scyllo-inosose + NADH + H(+). In terms of biological role, involved in the oxidation of myo-inositol (MI) to 2-keto-myo-inositol (2KMI or 2-inosose). In Paracoccus denitrificans (strain Pd 1222), this protein is Inositol 2-dehydrogenase.